Consider the following 362-residue polypeptide: Salactin (362 aa).

The span at 1 to 10 (MSDDTEDDSG) shows a compositional bias: acidic residues. A disordered region spans residues 1–28 (MSDDTEDDSGGESTADMEFGEQPAPLGV).

Forms dynamically unstable filaments. Monomers are added at the growing filament end. In vitro, salactin polymerizes in the presence of ATP and AMP-PNP but not in the presence of ADP, GTP, ATPgammaS or buffer alone.

Its subcellular location is the cytoplasm. In terms of biological role, actin homolog which might be involved in partitioning DNA between daughter cells when chromosomal copy number is low. The chain is Salactin from Halobacterium salinarum (strain ATCC 700922 / JCM 11081 / NRC-1) (Halobacterium halobium).